The following is a 1153-amino-acid chain: PPi-type phosphoenolpyruvate carboxykinase 3 (1153 aa).

A coiled-coil region spans residues 1085 to 1131; that stretch reads RQKLEVAKLNKDLAYLNKTIAEKPRLAETLNKQIAAVKEELQYVSSE.

Belongs to the PPi-type phosphoenolpyruvate carboxykinase family. As to quaternary structure, monomer and trimer; forms heterotrimers with PEPCK1 and PEPCK2.

It is found in the cytoplasm. Its subcellular location is the cytosol. The enzyme catalyses oxaloacetate + diphosphate = phosphoenolpyruvate + phosphate + CO2. Functionally, inorganic pyrophosphate (PPi)-dependent phosphoenolpyruvate carboxykinase, which regulates the carbon flow of the central metabolism by fixing CO(2) to phosphoenolpyruvate to produce oxaloacetate. Can also produce pyruvate and diphosphate from phosphoenolpyruvate and phosphate. The sequence is that of PPi-type phosphoenolpyruvate carboxykinase 3 from Entamoeba histolytica (strain ATCC 30459 / HM-1:IMSS / ABRM).